A 160-amino-acid polypeptide reads, in one-letter code: SsrA-binding protein (160 aa).

The interval 131 to 160 (KKEYDKRDTERERDAGRELQRAVRNKGKED) is disordered.

Belongs to the SmpB family.

The protein localises to the cytoplasm. Required for rescue of stalled ribosomes mediated by trans-translation. Binds to transfer-messenger RNA (tmRNA), required for stable association of tmRNA with ribosomes. tmRNA and SmpB together mimic tRNA shape, replacing the anticodon stem-loop with SmpB. tmRNA is encoded by the ssrA gene; the 2 termini fold to resemble tRNA(Ala) and it encodes a 'tag peptide', a short internal open reading frame. During trans-translation Ala-aminoacylated tmRNA acts like a tRNA, entering the A-site of stalled ribosomes, displacing the stalled mRNA. The ribosome then switches to translate the ORF on the tmRNA; the nascent peptide is terminated with the 'tag peptide' encoded by the tmRNA and targeted for degradation. The ribosome is freed to recommence translation, which seems to be the essential function of trans-translation. This Pseudomonas fluorescens (strain Pf0-1) protein is SsrA-binding protein.